The chain runs to 204 residues: Dephospho-CoA kinase (204 aa).

A DPCK domain is found at 3–204; it reads VIGLTGGIGS…DRLDLAYRAH (202 aa). 11–16 serves as a coordination point for ATP; sequence GSGKSY.

It belongs to the CoaE family.

It localises to the cytoplasm. The catalysed reaction is 3'-dephospho-CoA + ATP = ADP + CoA + H(+). Its pathway is cofactor biosynthesis; coenzyme A biosynthesis; CoA from (R)-pantothenate: step 5/5. In terms of biological role, catalyzes the phosphorylation of the 3'-hydroxyl group of dephosphocoenzyme A to form coenzyme A. In Ralstonia nicotianae (strain ATCC BAA-1114 / GMI1000) (Ralstonia solanacearum), this protein is Dephospho-CoA kinase.